We begin with the raw amino-acid sequence, 212 residues long: Thiamine-phosphate synthase (212 aa).

Residues 39 to 41 and N71 contribute to the 4-amino-2-methyl-5-(diphosphooxymethyl)pyrimidine site; that span reads QLR. The Mg(2+) site is built by D72 and D91. Position 110 (S110) interacts with 4-amino-2-methyl-5-(diphosphooxymethyl)pyrimidine. 136 to 138 contacts 2-[(2R,5Z)-2-carboxy-4-methylthiazol-5(2H)-ylidene]ethyl phosphate; the sequence is TGT. Residue K139 participates in 4-amino-2-methyl-5-(diphosphooxymethyl)pyrimidine binding. 2-[(2R,5Z)-2-carboxy-4-methylthiazol-5(2H)-ylidene]ethyl phosphate is bound by residues G167 and 187–188; that span reads VS.

This sequence belongs to the thiamine-phosphate synthase family. It depends on Mg(2+) as a cofactor.

The catalysed reaction is 2-[(2R,5Z)-2-carboxy-4-methylthiazol-5(2H)-ylidene]ethyl phosphate + 4-amino-2-methyl-5-(diphosphooxymethyl)pyrimidine + 2 H(+) = thiamine phosphate + CO2 + diphosphate. It catalyses the reaction 2-(2-carboxy-4-methylthiazol-5-yl)ethyl phosphate + 4-amino-2-methyl-5-(diphosphooxymethyl)pyrimidine + 2 H(+) = thiamine phosphate + CO2 + diphosphate. The enzyme catalyses 4-methyl-5-(2-phosphooxyethyl)-thiazole + 4-amino-2-methyl-5-(diphosphooxymethyl)pyrimidine + H(+) = thiamine phosphate + diphosphate. The protein operates within cofactor biosynthesis; thiamine diphosphate biosynthesis; thiamine phosphate from 4-amino-2-methyl-5-diphosphomethylpyrimidine and 4-methyl-5-(2-phosphoethyl)-thiazole: step 1/1. Condenses 4-methyl-5-(beta-hydroxyethyl)thiazole monophosphate (THZ-P) and 2-methyl-4-amino-5-hydroxymethyl pyrimidine pyrophosphate (HMP-PP) to form thiamine monophosphate (TMP). In Azorhizobium caulinodans (strain ATCC 43989 / DSM 5975 / JCM 20966 / LMG 6465 / NBRC 14845 / NCIMB 13405 / ORS 571), this protein is Thiamine-phosphate synthase.